The chain runs to 437 residues: 5-hydroxytryptamine receptor 3B (437 aa).

A signal peptide spans methionine 1–proline 21. Residues glutamine 22–proline 235 lie on the Extracellular side of the membrane. Residues asparagine 25, asparagine 92, and asparagine 134 are each glycosylated (N-linked (GlcNAc...) asparagine). A disulfide bridge connects residues cysteine 151 and cysteine 165. The chain crosses the membrane as a helical span at residues leucine 236–glycine 255. The Cytoplasmic segment spans residues serine 256–arginine 266. The chain crosses the membrane as a helical span at residues isoleucine 267–methionine 284. Over serine 285 to threonine 295 the chain is Extracellular. The chain crosses the membrane as a helical span at residues serine 296 to tyrosine 324. Over glutamate 325–glutamine 410 the chain is Cytoplasmic. Residues phenylalanine 377–aspartate 409 are HA-stretch; determines single-channel conductance in 5-HT3 receptors. Residues leucine 411–tryptophan 434 traverse the membrane as a helical segment. Over serine 435–methionine 437 the chain is Extracellular.

The protein belongs to the ligand-gated ion channel (TC 1.A.9) family. 5-hydroxytryptamine receptor (TC 1.A.9.2) subfamily. HTR3B sub-subfamily. Forms homopentameric as well as heteropentameric serotonin-activated cation-selective channel complexes with HTR3A. The homomeric complex is not functional. Heteropentameric complexes display properties which resemble that of neuronal serotonin-activated channels in vivo. N-glycosylation is required for membrane localization. As to expression, expressed in peripheral neurons, but not in neurons of the central nervous system.

It localises to the postsynaptic cell membrane. It is found in the cell membrane. It catalyses the reaction Na(+)(in) = Na(+)(out). The enzyme catalyses K(+)(in) = K(+)(out). It carries out the reaction Ca(2+)(in) = Ca(2+)(out). Forms serotonin (5-hydroxytryptamine/5-HT3)-activated cation-selective channel complexes, which when activated cause fast, depolarizing responses in neurons. The chain is 5-hydroxytryptamine receptor 3B from Rattus norvegicus (Rat).